The following is a 364-amino-acid chain: MGILEKIKDIEAEMSRTQKNKATEYHLGLLKAKLARLRQQLLDPPKSSGKGGDGFEVLKSGDARVALIGFPSVGKSTILTKLTETKSLAAAYEFTTLTCIPGVIQHKGARIQLLDTPGIIEGASQGRGRGRQVIAVARTADLILMMLDANKGEIQKRLLQEELESIGIRLNSQPPNIYFKLKSAGGVNLTATQTLTKITEKLAKSILHEYKIFNCDLVIRCDPTVDELIDAIEGRRSYIRCLYVYNKMDHMSMEDVDRLSRQPNSVVISCNMNLNLDFLLDKIWDYLNLVRVYTKLRGASPDFNDAIILREGATMEDICRFLHKELVSQFKYGIVWGVSAKHCPQRVGISHALEDEDVIQIVKK.

An OBG-type G domain is found at 63 to 288; that stretch reads ARVALIGFPS…LLDKIWDYLN (226 aa). GTP is bound by residues 69-76, 115-119, and 246-249; these read GFPSVGKS, DTPGI, and NKMD. One can recognise a TGS domain in the interval 288 to 363; it reads NLVRVYTKLR…EDEDVIQIVK (76 aa).

The protein belongs to the TRAFAC class OBG-HflX-like GTPase superfamily. OBG GTPase family.

This chain is Developmentally-regulated GTP-binding protein 2 homolog (drg2), found in Dictyostelium discoideum (Social amoeba).